The primary structure comprises 157 residues: Succinate dehydrogenase assembly factor 2-B, mitochondrial (157 aa).

The transit peptide at 1–22 (MLSQWFRGRHLVVRSALFSRRR) directs the protein to the mitochondrion.

It belongs to the SDHAF2 family. In terms of assembly, interacts with the flavoprotein subunit within the SDH catalytic dimer.

The protein resides in the mitochondrion matrix. Plays an essential role in the assembly of succinate dehydrogenase (SDH), an enzyme complex (also referred to as respiratory complex II) that is a component of both the tricarboxylic acid (TCA) cycle and the mitochondrial electron transport chain, and which couples the oxidation of succinate to fumarate with the reduction of ubiquinone (coenzyme Q) to ubiquinol. Required for flavinylation (covalent attachment of FAD) of the flavoprotein subunit of the SDH catalytic dimer. The chain is Succinate dehydrogenase assembly factor 2-B, mitochondrial from Drosophila mojavensis (Fruit fly).